Reading from the N-terminus, the 303-residue chain is sn-1-specific diacylglycerol lipase ABHD11 (303 aa).

A mitochondrion-targeting transit peptide spans 1-22; that stretch reads MLRWTRAWTAPYRGIGLSNSSF. The AB hydrolase-1 domain maps to 55 to 290; sequence PALVFLHGLF…NAGHWVHSDR (236 aa). Lys-75 carries the post-translational modification N6-succinyllysine. Residues Ser-129, Asp-225, and His-284 each act as charge relay system in the active site.

It belongs to the AB hydrolase superfamily. As to quaternary structure, interacts with OGDH and DLST; this interaction maintains the functional lipoylation of the 2-oxoglutarate dehydrogenase complex. In terms of processing, phosphorylated.

The protein resides in the mitochondrion. It localises to the mitochondrion matrix. It carries out the reaction a 1,3-diacyl-sn-glycerol + H2O = a 1-acyl-sn-glycerol + a fatty acid + H(+). It catalyses the reaction 1-octadecanoyl-2-(9Z-octadecenoyl)-sn-glycerol + H2O = 2-(9Z-octadecenoyl)-glycerol + octadecanoate + H(+). The enzyme catalyses 1-octadecanoyl-2-(4Z,7Z,10Z,13Z,16Z,19Z-docosahexaenoyl)-sn-glycerol + H2O = 2-(4Z,7Z,10Z,13Z,16Z,19Z-docosahexaenoyl)-glycerol + octadecanoate + H(+). The catalysed reaction is a 1,2-diacyl-sn-glycerol + H2O = a 2-acylglycerol + a fatty acid + H(+). It carries out the reaction 1,2-didecanoylglycerol + H2O = decanoylglycerol + decanoate + H(+). It catalyses the reaction 1-octadecanoyl-2-(5Z,8Z,11Z,14Z-eicosatetraenoyl)-sn-glycerol + H2O = 2-(5Z,8Z,11Z,14Z-eicosatetraenoyl)-glycerol + octadecanoate + H(+). Its activity is regulated as follows. The diacylglycerol lipase activity can be modulated by phosphorylation by cAMP-dependent protein kinase. Its function is as follows. Catalyzes the hydrolysis of diacylglycerol in vitro and may function as a key regulator in lipid metabolism, namely by regulating the intracellular levels of diacylglycerol. 1,2-diacyl-sn-glycerols are the preferred substrate over 1,3-diacyl-sn-glycerols. The enzyme hydrolyzes stearate in preference to palmitate from the sn-1 position of 1,2-diacyl-sn-glycerols. Maintains the functional lipoylation of the 2-oxoglutarate dehydrogenase complex (OGDHc) through its interaction with the OGDHc by preventing the formation of lipoyl adducts. In addition, is also required for the expansion and differentiation of embryonic stem cells (ESCs). This is sn-1-specific diacylglycerol lipase ABHD11 from Bos taurus (Bovine).